We begin with the raw amino-acid sequence, 563 residues long: Dihydroxy-acid dehydratase (563 aa).

Residue Cys50 coordinates [2Fe-2S] cluster. Asp82 contributes to the Mg(2+) binding site. Cys123 contributes to the [2Fe-2S] cluster binding site. Mg(2+) contacts are provided by Asp124 and Lys125. At Lys125 the chain carries N6-carboxylysine. Residue Cys195 coordinates [2Fe-2S] cluster. A Mg(2+)-binding site is contributed by Glu447. Ser473 serves as the catalytic Proton acceptor.

It belongs to the IlvD/Edd family. In terms of assembly, homodimer. The cofactor is [2Fe-2S] cluster. Requires Mg(2+) as cofactor.

The catalysed reaction is (2R)-2,3-dihydroxy-3-methylbutanoate = 3-methyl-2-oxobutanoate + H2O. It carries out the reaction (2R,3R)-2,3-dihydroxy-3-methylpentanoate = (S)-3-methyl-2-oxopentanoate + H2O. Its pathway is amino-acid biosynthesis; L-isoleucine biosynthesis; L-isoleucine from 2-oxobutanoate: step 3/4. The protein operates within amino-acid biosynthesis; L-valine biosynthesis; L-valine from pyruvate: step 3/4. In terms of biological role, functions in the biosynthesis of branched-chain amino acids. Catalyzes the dehydration of (2R,3R)-2,3-dihydroxy-3-methylpentanoate (2,3-dihydroxy-3-methylvalerate) into 2-oxo-3-methylpentanoate (2-oxo-3-methylvalerate) and of (2R)-2,3-dihydroxy-3-methylbutanoate (2,3-dihydroxyisovalerate) into 2-oxo-3-methylbutanoate (2-oxoisovalerate), the penultimate precursor to L-isoleucine and L-valine, respectively. The protein is Dihydroxy-acid dehydratase of Nostoc sp. (strain PCC 7120 / SAG 25.82 / UTEX 2576).